Consider the following 89-residue polypeptide: Small ribosomal subunit protein uS15 (89 aa).

This sequence belongs to the universal ribosomal protein uS15 family. As to quaternary structure, part of the 30S ribosomal subunit. Forms a bridge to the 50S subunit in the 70S ribosome, contacting the 23S rRNA.

Functionally, one of the primary rRNA binding proteins, it binds directly to 16S rRNA where it helps nucleate assembly of the platform of the 30S subunit by binding and bridging several RNA helices of the 16S rRNA. Forms an intersubunit bridge (bridge B4) with the 23S rRNA of the 50S subunit in the ribosome. The polypeptide is Small ribosomal subunit protein uS15 (Bartonella bacilliformis (strain ATCC 35685 / KC583 / Herrer 020/F12,63)).